We begin with the raw amino-acid sequence, 87 residues long: Small ribosomal subunit protein uS15 (87 aa).

Belongs to the universal ribosomal protein uS15 family. In terms of assembly, part of the 30S ribosomal subunit. Forms a bridge to the 50S subunit in the 70S ribosome, contacting the 23S rRNA.

Its function is as follows. One of the primary rRNA binding proteins, it binds directly to 16S rRNA where it helps nucleate assembly of the platform of the 30S subunit by binding and bridging several RNA helices of the 16S rRNA. In terms of biological role, forms an intersubunit bridge (bridge B4) with the 23S rRNA of the 50S subunit in the ribosome. This chain is Small ribosomal subunit protein uS15, found in Clostridium acetobutylicum (strain ATCC 824 / DSM 792 / JCM 1419 / IAM 19013 / LMG 5710 / NBRC 13948 / NRRL B-527 / VKM B-1787 / 2291 / W).